The chain runs to 437 residues: RING finger protein 150 (437 aa).

Positions 1–34 (MTMSLIQACRSLALSTWLLSFCFVHLLCLDFTVA) are cleaved as a signal peptide. At 35-207 (EKEEWYTAFV…NLQKYVSRTS (173 aa)) the chain is on the extracellular side. 4 N-linked (GlcNAc...) asparagine glycosylation sites follow: N45, N124, N152, and N185. The 103-residue stretch at 80–182 (SPKQDARGEV…PKGKEIVSLL (103 aa)) folds into the PA domain. The helical transmembrane segment at 208 to 228 (VVFVSISFIVLMIISLAWLVF) threads the bilayer. Over 229-437 (YYIQRFRYAN…TDQDCEEVKS (209 aa)) the chain is Cytoplasmic. An RING-type; atypical zinc finger spans residues 277 to 318 (CAVCIEGYKPNDVVRILPCRHLFHKSCVDPWLLDHRTCPMCK).

It localises to the membrane. This Mus musculus (Mouse) protein is RING finger protein 150 (Rnf150).